We begin with the raw amino-acid sequence, 180 residues long: MASVVASAAVVTPFAASAASTTKSSQIVSVQAGLKAGVFGGKSEWQTKTQTNGSRVSCMQVWEPYNNLKFETLSYLPPLSQDALAKQIDYVIKSGWAPCIEFDVQGTVTREGSTMPGYYDGRYWTMWKLPMFGCTDSASVLREIEECKKLYGKKCYIRCLGFDNTRQVQCASFIVHQPTL.

The transit peptide at 1–57 directs the protein to the chloroplast; that stretch reads MASVVASAAVVTPFAASAASTTKSSQIVSVQAGLKAGVFGGKSEWQTKTQTNGSRVS.

It belongs to the RuBisCO small chain family. Heterohexadecamer of 8 large and 8 small subunits.

It localises to the plastid. Its subcellular location is the chloroplast. Functionally, ruBisCO catalyzes two reactions: the carboxylation of D-ribulose 1,5-bisphosphate, the primary event in carbon dioxide fixation, as well as the oxidative fragmentation of the pentose substrate. Both reactions occur simultaneously and in competition at the same active site. Although the small subunit is not catalytic it is essential for maximal activity. This chain is Ribulose bisphosphate carboxylase small subunit, chloroplastic, found in Marchantia paleacea (Liverwort).